Consider the following 616-residue polypeptide: Chaperone protein HscA (616 aa).

This sequence belongs to the heat shock protein 70 family.

In terms of biological role, chaperone involved in the maturation of iron-sulfur cluster-containing proteins. Has a low intrinsic ATPase activity which is markedly stimulated by HscB. Involved in the maturation of IscU. This Klebsiella pneumoniae subsp. pneumoniae (strain ATCC 700721 / MGH 78578) protein is Chaperone protein HscA.